The primary structure comprises 286 residues: 33 kDa chaperonin (286 aa).

2 cysteine pairs are disulfide-bonded: Cys225/Cys227 and Cys258/Cys261.

Belongs to the HSP33 family. Under oxidizing conditions two disulfide bonds are formed involving the reactive cysteines. Under reducing conditions zinc is bound to the reactive cysteines and the protein is inactive.

The protein localises to the cytoplasm. Functionally, redox regulated molecular chaperone. Protects both thermally unfolding and oxidatively damaged proteins from irreversible aggregation. Plays an important role in the bacterial defense system toward oxidative stress. The protein is 33 kDa chaperonin of Shewanella putrefaciens (strain CN-32 / ATCC BAA-453).